A 534-amino-acid chain; its full sequence is ATP synthase subunit beta 2 (534 aa).

The segment covering 1 to 10 (MADPQATNGT) has biased composition (polar residues). A disordered region spans residues 1-30 (MADPQATNGTGAACAERDASDVGDVSDVGD). An ATP-binding site is contributed by 185–192 (GGAGVGKT). A compositionally biased stretch (basic and acidic residues) spans 494–505 (AAAREADARREA). The interval 494–534 (AAAREADARREAAAAASGAGPGTTSDPASGSAEPQGARHGR) is disordered.

It belongs to the ATPase alpha/beta chains family. F-type ATPases have 2 components, CF(1) - the catalytic core - and CF(0) - the membrane proton channel. CF(1) has five subunits: alpha(3), beta(3), gamma(1), delta(1), epsilon(1). CF(0) has three main subunits: a(1), b(2) and c(9-12). The alpha and beta chains form an alternating ring which encloses part of the gamma chain. CF(1) is attached to CF(0) by a central stalk formed by the gamma and epsilon chains, while a peripheral stalk is formed by the delta and b chains.

It localises to the cell inner membrane. It catalyses the reaction ATP + H2O + 4 H(+)(in) = ADP + phosphate + 5 H(+)(out). Its function is as follows. Produces ATP from ADP in the presence of a proton gradient across the membrane. The catalytic sites are hosted primarily by the beta subunits. The sequence is that of ATP synthase subunit beta 2 from Burkholderia pseudomallei (strain 668).